We begin with the raw amino-acid sequence, 81 residues long: Styelin-E (81 aa).

Residues 1–22 (MQMKATILIVLVALFMIQQSEA) form the signal peptide. Position 24 is a 6'-bromotryptophan (tryptophan 24). At arginine 26 the chain carries 3,4-dihydroxyarginine. 4,5-dihydroxylysine occurs at positions 27, 30, and 34. 3',4'-dihydroxyphenylalanine occurs at positions 36 and 37. Lysine 38 is modified (4,5-dihydroxylysine). A 5-hydroxylysine modification is found at lysine 40. 3',4'-dihydroxyphenylalanine occurs at positions 41 and 42. 5-hydroxylysine is present on lysine 44. Leucine 54 is subject to Leucine amide. Positions 56–81 (DMTDEEFQDFMKEVEQAREEELQSRQ) are cleaved as a propeptide — removed in mature form.

Contains L-DOPA (3',4'-dihydroxyphenylalanine). As to expression, hemocytes and pharyngeal tissues.

Its subcellular location is the secreted. Functionally, bactericidal against several Gram-positive and Gram-negative bacteria. The sequence is that of Styelin-E from Styela clava (Sea squirt).